We begin with the raw amino-acid sequence, 220 residues long: Late transcription elongation factor OPG087 (220 aa).

Belongs to the orthopoxvirus OPG087 family. Interacts with H5 and A18. Might be part of a transcription complex composed at least of OPG087, OPG145, and OPG110.

Involved in postreplicative transcription elongation on intermediate and late genes. The polypeptide is Late transcription elongation factor OPG087 (OPG087) (Cynomys gunnisoni (Gunnison's prairie dog)).